The chain runs to 1396 residues: MVDITNFFKKTNKADSSQAFNRVRINIASPEQIRSWSYGEVTKPETINYRTFKPEKDGLFCAKIFGPVKDYECLCGKYKRMKYRGIVCEKCGVEVTTSKVRRERMGHIELASPIAHIWFVRSLPSRISILLDMNLKDLERVIYFEAYIVMDPGLSPLHKGDLLTEEMLQQAQNEYGEDNFIVGIGAEAIRTLLAELDLKSLRNALQEEVNNVINSDFKRKKILRRLKLIEDFIGSGNKPEWMIVTVLPIIPPELRPLVMLDAGRFASSDLNELYRRLINRNNRLKYLKKEEDGVPGIVLRNEQRMVQLSADTLFDNGKRGKAVKNSNKRPFKSLSDMLKGKQGRFRQNLLGKRVDYSGRSVIVVGPELKLHQCGLPKQMALELFKPFVYAELERCGIATTIKAAKRIVELGTPDVWNALAKVIKHHPVLLNRAPTLHCLSIQAFEPVLIEDKAIQLHPLVCTAFNADFDGDQMAVHVPLSTEAQLEARVLMMSTNNILSPANGRPIIVPDKDIVLGLYYLTLSIDGEVGEGRLFGSMAEIHHALFNKVVSLHSKIKFRKYIINADGDKVMALVNTTPGRLILGELLPDGDSISFDVVNKVMTKKGISAIVDMVYRYYGQKATVVFADKLMKLGFKYACMSGISFGMDDMIVPETKSKHVNDTLLEVQEFERQYSEGLITSGEKYNKVIDAWSRYTDRVANDMMKGIAAGDQTSVGLTNQERLNSIFMMADSEARSSVTQIKQLIGSKGLIAKASGEIIDRPILSNFCEGLTVFECFIGIPGTRKGLADTAVKTKVSGHLSRKLSESAHGYFVKREDCGTTNGLIITAVVEGGVIVVTLAEQVLGRVAVSNVYCPVTKVLILQQGEMIDEYKVELINTAGINSIKVRSVLTCELQEGVCAKCYGRDLSTGKLVAIGTAVGIVAAQSIGEPGTQLTMRTFHIGGAATRGVEASSFEAIVDGRVKIINPNFVVNSNNKSVIMSRSCEVILADNVGQEITRYKAQYGSILLVTDGQEVTKGTALVVWDPYAMPIVTEKSGYVMFKDMIDGVSVKDIIDESTGIVNRVIIEPKQGRGEVVLRPRICLLDQNKQPLTLSNGLEAEYFLPVNSILSVEEGVNVSAGDILARIPREFAGTKDITGGLPRVIELFEARKPKNHAVIAEIDGCVKFGKDYKSKRRLILQPNDESHEPIEYILPKGRHVTVNEGDVVKKGDMLIEGSPVLQDILKVMGVEALGLYIINEIQAVYRLQGVKIDNKHIEVIITRMLQKVEITDSGDSNFVIEEKVNKRAVINTNKKLKAKGLREAQYRPILQGITKASLQTESFISAASFQETTRVLTEAAIAGKVDKLEGLKENVIVGQTIPAGTGFYINEIKKIARQRDKEIIAARDAELQENNTEA.

Cys73, Cys75, Cys88, and Cys91 together coordinate Zn(2+). The Mg(2+) site is built by Asp467, Asp469, and Asp471. Positions 817, 891, 898, and 901 each coordinate Zn(2+).

Belongs to the RNA polymerase beta' chain family. The RNAP catalytic core consists of 2 alpha, 1 beta, 1 beta' and 1 omega subunit. When a sigma factor is associated with the core the holoenzyme is formed, which can initiate transcription. Mg(2+) serves as cofactor. The cofactor is Zn(2+).

It catalyses the reaction RNA(n) + a ribonucleoside 5'-triphosphate = RNA(n+1) + diphosphate. DNA-dependent RNA polymerase catalyzes the transcription of DNA into RNA using the four ribonucleoside triphosphates as substrates. This Orientia tsutsugamushi (strain Ikeda) (Rickettsia tsutsugamushi) protein is DNA-directed RNA polymerase subunit beta'.